Reading from the N-terminus, the 81-residue chain is Acyl carrier protein (81 aa).

One can recognise a Carrier domain in the interval 2–80 (ASKDEILAGL…DAVNFIDNAQ (79 aa)). Residue Ser40 is modified to O-(pantetheine 4'-phosphoryl)serine.

It belongs to the acyl carrier protein (ACP) family. Post-translationally, 4'-phosphopantetheine is transferred from CoA to a specific serine of apo-ACP by AcpS. This modification is essential for activity because fatty acids are bound in thioester linkage to the sulfhydryl of the prosthetic group.

The protein localises to the cytoplasm. It participates in lipid metabolism; fatty acid biosynthesis. Carrier of the growing fatty acid chain in fatty acid biosynthesis. In Kocuria rhizophila (strain ATCC 9341 / DSM 348 / NBRC 103217 / DC2201), this protein is Acyl carrier protein.